We begin with the raw amino-acid sequence, 277 residues long: Putative hydro-lyase BP1875 (277 aa).

This sequence belongs to the D-glutamate cyclase family.

The polypeptide is Putative hydro-lyase BP1875 (Bordetella pertussis (strain Tohama I / ATCC BAA-589 / NCTC 13251)).